Consider the following 95-residue polypeptide: Integration host factor subunit beta (95 aa).

This sequence belongs to the bacterial histone-like protein family. In terms of assembly, heterodimer of an alpha and a beta chain.

This protein is one of the two subunits of integration host factor, a specific DNA-binding protein that functions in genetic recombination as well as in transcriptional and translational control. In Shewanella pealeana (strain ATCC 700345 / ANG-SQ1), this protein is Integration host factor subunit beta.